The chain runs to 346 residues: Elongation factor Ts (346 aa).

The involved in Mg(2+) ion dislocation from EF-Tu stretch occupies residues 80 to 83; it reads TDFV.

It belongs to the EF-Ts family.

It localises to the cytoplasm. In terms of biological role, associates with the EF-Tu.GDP complex and induces the exchange of GDP to GTP. It remains bound to the aminoacyl-tRNA.EF-Tu.GTP complex up to the GTP hydrolysis stage on the ribosome. This is Elongation factor Ts from Streptococcus pneumoniae (strain 70585).